The primary structure comprises 505 residues: ATP synthase subunit alpha (505 aa).

ATP is bound at residue 169–176; that stretch reads GDRKTGKT.

It belongs to the ATPase alpha/beta chains family. As to quaternary structure, F-type ATPases have 2 components, CF(1) - the catalytic core - and CF(0) - the membrane proton channel. CF(1) has five subunits: alpha(3), beta(3), gamma(1), delta(1), epsilon(1). CF(0) has three main subunits: a(1), b(2) and c(9-12). The alpha and beta chains form an alternating ring which encloses part of the gamma chain. CF(1) is attached to CF(0) by a central stalk formed by the gamma and epsilon chains, while a peripheral stalk is formed by the delta and b chains.

Its subcellular location is the cell membrane. It catalyses the reaction ATP + H2O + 4 H(+)(in) = ADP + phosphate + 5 H(+)(out). Its function is as follows. Produces ATP from ADP in the presence of a proton gradient across the membrane. The alpha chain is a regulatory subunit. This chain is ATP synthase subunit alpha, found in Pediococcus pentosaceus (strain ATCC 25745 / CCUG 21536 / LMG 10740 / 183-1w).